A 105-amino-acid chain; its full sequence is Small ribosomal subunit protein uS10 (105 aa).

It belongs to the universal ribosomal protein uS10 family. In terms of assembly, part of the 30S ribosomal subunit.

Involved in the binding of tRNA to the ribosomes. In Bdellovibrio bacteriovorus (strain ATCC 15356 / DSM 50701 / NCIMB 9529 / HD100), this protein is Small ribosomal subunit protein uS10.